The primary structure comprises 211 residues: Probable transcription repressor protein RGM1 (211 aa).

A Nuclear localization signal motif is present at residues 6 to 11; the sequence is PKRNKD. 2 C2H2-type zinc fingers span residues 19-44 and 50-73; these read YRCV…IRKH and FQCN…SSVH. The disordered stretch occupies residues 178–211; the sequence is NIVELPPDSSDTPASPSKVQSFDQAKDASPNAKK. The segment covering 183–194 has biased composition (low complexity); that stretch reads PPDSSDTPASPS.

The protein localises to the nucleus. This chain is Probable transcription repressor protein RGM1 (RGM1), found in Saccharomyces cerevisiae (strain ATCC 204508 / S288c) (Baker's yeast).